The chain runs to 613 residues: Dihydroxy-acid dehydratase (613 aa).

Mg(2+) is bound at residue Asp81. Cys122 serves as a coordination point for [2Fe-2S] cluster. Asp123 and Lys124 together coordinate Mg(2+). Lys124 bears the N6-carboxylysine mark. Cys195 is a binding site for [2Fe-2S] cluster. Glu491 is a binding site for Mg(2+). The Proton acceptor role is filled by Ser517.

The protein belongs to the IlvD/Edd family. In terms of assembly, homodimer. Requires [2Fe-2S] cluster as cofactor. The cofactor is Mg(2+).

The enzyme catalyses (2R)-2,3-dihydroxy-3-methylbutanoate = 3-methyl-2-oxobutanoate + H2O. The catalysed reaction is (2R,3R)-2,3-dihydroxy-3-methylpentanoate = (S)-3-methyl-2-oxopentanoate + H2O. Its pathway is amino-acid biosynthesis; L-isoleucine biosynthesis; L-isoleucine from 2-oxobutanoate: step 3/4. It participates in amino-acid biosynthesis; L-valine biosynthesis; L-valine from pyruvate: step 3/4. Its function is as follows. Functions in the biosynthesis of branched-chain amino acids. Catalyzes the dehydration of (2R,3R)-2,3-dihydroxy-3-methylpentanoate (2,3-dihydroxy-3-methylvalerate) into 2-oxo-3-methylpentanoate (2-oxo-3-methylvalerate) and of (2R)-2,3-dihydroxy-3-methylbutanoate (2,3-dihydroxyisovalerate) into 2-oxo-3-methylbutanoate (2-oxoisovalerate), the penultimate precursor to L-isoleucine and L-valine, respectively. This is Dihydroxy-acid dehydratase from Buchnera aphidicola subsp. Melaphis rhois.